The primary structure comprises 276 residues: Undecaprenyl-diphosphatase (276 aa).

The next 6 membrane-spanning stretches (helical) occupy residues 43–63 (RAMAFNIIIQLAAILAVVWEF), 85–105 (GNLLLAFMPAVVLGVLFADLI), 109–129 (LFNPVTVAAALVVGGVIMLWA), 183–203 (AATEFSFFLAMPTMVGAAVYS), 214–234 (GDLPVFALGFVTSFIFAMIAV), and 249–269 (FAWYRIVFGLFILATWQFGWV).

This sequence belongs to the UppP family.

The protein localises to the cell inner membrane. The enzyme catalyses di-trans,octa-cis-undecaprenyl diphosphate + H2O = di-trans,octa-cis-undecaprenyl phosphate + phosphate + H(+). Catalyzes the dephosphorylation of undecaprenyl diphosphate (UPP). Confers resistance to bacitracin. This chain is Undecaprenyl-diphosphatase, found in Pseudomonas putida (strain ATCC 700007 / DSM 6899 / JCM 31910 / BCRC 17059 / LMG 24140 / F1).